A 59-amino-acid chain; its full sequence is Large ribosomal subunit protein uL30 (59 aa).

This sequence belongs to the universal ribosomal protein uL30 family. As to quaternary structure, part of the 50S ribosomal subunit.

This Ectopseudomonas mendocina (strain ymp) (Pseudomonas mendocina) protein is Large ribosomal subunit protein uL30.